The sequence spans 364 residues: DNA polymerase IV (364 aa).

A UmuC domain is found at 7 to 187 (IIHVDMDAFY…LPVNRVPGVG (181 aa)). Asp-11 and Asp-105 together coordinate Mg(2+). Glu-106 is a catalytic residue.

This sequence belongs to the DNA polymerase type-Y family. In terms of assembly, monomer. The cofactor is Mg(2+).

It localises to the cytoplasm. The catalysed reaction is DNA(n) + a 2'-deoxyribonucleoside 5'-triphosphate = DNA(n+1) + diphosphate. Functionally, poorly processive, error-prone DNA polymerase involved in untargeted mutagenesis. Copies undamaged DNA at stalled replication forks, which arise in vivo from mismatched or misaligned primer ends. These misaligned primers can be extended by PolIV. Exhibits no 3'-5' exonuclease (proofreading) activity. May be involved in translesional synthesis, in conjunction with the beta clamp from PolIII. This chain is DNA polymerase IV, found in Stenotrophomonas maltophilia (strain K279a).